The chain runs to 586 residues: Retron Ec67 protein (586 aa).

Positions 29 to 262 constitute a Reverse transcriptase domain; it reads FLTNVLYRIG…SRQEVTGLTV (234 aa). Residues Asp120, Asp201, and Asp202 each contribute to the Mg(2+) site.

It belongs to the bacterial reverse transcriptase family.

It catalyses the reaction DNA(n) + a 2'-deoxyribonucleoside 5'-triphosphate = DNA(n+1) + diphosphate. The enzyme catalyses Endonucleolytic cleavage to 5'-phosphomonoester.. Reverse transcriptase (RT) component of antiviral defense system retron Ec67, minimally composed of a non-coding RNA (ncRNA) and this RT. Expression of these 2 elements confers protection against bacteriophage T5. At multiplicity of infection (MOI) of 0.02 cultures grow normally when infected with T5 without collapsing, at MOI 2 cultures enter growth stasis. Responsible for synthesis of msDNA-Ec67 (a branched molecule with RNA linked by a 2',5'-phosphodiester bond to ssDNA). The retron transcript serves as primer (from a conserved internal G residue) and template for the reaction, and codes for the RT. Can use other retrons as substrate (msDNA-Mx162 and msDNA-Ec86). Also able to synthesize DNA from a DNA template at least in vitro, although the enzyme is less active with a DNA template. In Escherichia coli, this protein is Retron Ec67 protein.